The sequence spans 218 residues: 1-Cys peroxiredoxin (218 aa).

Residues 4–164 form the Thioredoxin domain; sequence LTIGDTIPDL…VLRVVESLQK (161 aa). The Cysteine sulfenic acid (-SOH) intermediate role is filled by Cys-46. The Bipartite nuclear localization signal motif lies at 194–217; that stretch reads KEMFPQGFKTADLPSKKEYLRFTN.

This sequence belongs to the peroxiredoxin family. Prx6 subfamily.

Its subcellular location is the nucleus. The protein localises to the cytoplasm. The catalysed reaction is a hydroperoxide + [thioredoxin]-dithiol = an alcohol + [thioredoxin]-disulfide + H2O. Thiol-specific peroxidase that catalyzes the reduction of hydrogen peroxide and organic hydroperoxides to water and alcohols, respectively. Seems to contribute to the inhibition of germination during stress. This Medicago truncatula (Barrel medic) protein is 1-Cys peroxiredoxin.